The primary structure comprises 340 residues: N-acetyl-gamma-glutamyl-phosphate reductase (340 aa).

The active site involves Cys-146.

It belongs to the NAGSA dehydrogenase family. Type 1 subfamily.

Its subcellular location is the cytoplasm. It catalyses the reaction N-acetyl-L-glutamate 5-semialdehyde + phosphate + NADP(+) = N-acetyl-L-glutamyl 5-phosphate + NADPH + H(+). The protein operates within amino-acid biosynthesis; L-arginine biosynthesis; N(2)-acetyl-L-ornithine from L-glutamate: step 3/4. Functionally, catalyzes the NADPH-dependent reduction of N-acetyl-5-glutamyl phosphate to yield N-acetyl-L-glutamate 5-semialdehyde. The sequence is that of N-acetyl-gamma-glutamyl-phosphate reductase from Streptococcus thermophilus (strain CNRZ 1066).